A 584-amino-acid chain; its full sequence is uncharacterized protein (584 aa).

Disordered stretches follow at residues 151–188, 222–243, 399–418, and 433–584; these read EHPP…DNDL, KRKE…SRAN, SETP…PPDF, and MQPS…AKSD. Residues 159-188 are compositionally biased toward basic and acidic residues; the sequence is TSSEKTRSENRERKKRWREQNEERNKDNDL. The segment covering 231–243 has biased composition (low complexity); it reads LSQNQSSNASRAN. 5 stretches are compositionally biased toward polar residues: residues 399–409, 433–453, 483–500, 511–531, and 572–584; these read SETPTPVSGNG, MQPS…SSEM, NAVT…SGSP, NYSQ…SSLP, and QRSS…AKSD.

This is an uncharacterized protein from Schizosaccharomyces pombe (strain 972 / ATCC 24843) (Fission yeast).